Consider the following 269-residue polypeptide: Phosphatidylglycerol--prolipoprotein diacylglyceryl transferase (269 aa).

A run of 4 helical transmembrane segments spans residues 14–34, 49–69, 89–109, and 118–138; these read IVQI…AGII, VAPE…IPMA, VFAI…GLLA, and GYSL…GQAI. Arg-140 contacts a 1,2-diacyl-sn-glycero-3-phospho-(1'-sn-glycerol). Transmembrane regions (helical) follow at residues 180–200, 208–228, and 240–260; these read TFLY…FVFF, GSIA…IEGL, and TAQL…WWLN.

It belongs to the Lgt family.

It is found in the cell inner membrane. It carries out the reaction L-cysteinyl-[prolipoprotein] + a 1,2-diacyl-sn-glycero-3-phospho-(1'-sn-glycerol) = an S-1,2-diacyl-sn-glyceryl-L-cysteinyl-[prolipoprotein] + sn-glycerol 1-phosphate + H(+). Its pathway is protein modification; lipoprotein biosynthesis (diacylglyceryl transfer). Its function is as follows. Catalyzes the transfer of the diacylglyceryl group from phosphatidylglycerol to the sulfhydryl group of the N-terminal cysteine of a prolipoprotein, the first step in the formation of mature lipoproteins. The polypeptide is Phosphatidylglycerol--prolipoprotein diacylglyceryl transferase (Gloeobacter violaceus (strain ATCC 29082 / PCC 7421)).